The primary structure comprises 128 residues: Large ribosomal subunit protein bL12 (128 aa).

It belongs to the bacterial ribosomal protein bL12 family. In terms of assembly, homodimer. Part of the ribosomal stalk of the 50S ribosomal subunit. Forms a multimeric L10(L12)X complex, where L10 forms an elongated spine to which 2 to 4 L12 dimers bind in a sequential fashion. Binds GTP-bound translation factors.

Its function is as follows. Forms part of the ribosomal stalk which helps the ribosome interact with GTP-bound translation factors. Is thus essential for accurate translation. The sequence is that of Large ribosomal subunit protein bL12 from Kosmotoga olearia (strain ATCC BAA-1733 / DSM 21960 / TBF 19.5.1).